Reading from the N-terminus, the 329-residue chain is Tetraacyldisaccharide 4'-kinase (329 aa).

58 to 65 (SVGGTGKT) provides a ligand contact to ATP.

It belongs to the LpxK family.

It catalyses the reaction a lipid A disaccharide + ATP = a lipid IVA + ADP + H(+). It participates in glycolipid biosynthesis; lipid IV(A) biosynthesis; lipid IV(A) from (3R)-3-hydroxytetradecanoyl-[acyl-carrier-protein] and UDP-N-acetyl-alpha-D-glucosamine: step 6/6. Its function is as follows. Transfers the gamma-phosphate of ATP to the 4'-position of a tetraacyldisaccharide 1-phosphate intermediate (termed DS-1-P) to form tetraacyldisaccharide 1,4'-bis-phosphate (lipid IVA). The polypeptide is Tetraacyldisaccharide 4'-kinase (Idiomarina loihiensis (strain ATCC BAA-735 / DSM 15497 / L2-TR)).